A 322-amino-acid chain; its full sequence is tRNA uridine(34) hydroxylase (322 aa).

Positions 125-219 (QSPDTVVIDA…YGKDPEVQGK (95 aa)) constitute a Rhodanese domain. Cysteine 179 acts as the Cysteine persulfide intermediate in catalysis.

This sequence belongs to the TrhO family.

The enzyme catalyses uridine(34) in tRNA + AH2 + O2 = 5-hydroxyuridine(34) in tRNA + A + H2O. In terms of biological role, catalyzes oxygen-dependent 5-hydroxyuridine (ho5U) modification at position 34 in tRNAs. The polypeptide is tRNA uridine(34) hydroxylase (Bacillus pumilus (strain SAFR-032)).